Here is a 141-residue protein sequence, read N- to C-terminus: Hemoglobin subunit beta-C(NA) (141 aa).

The Globin domain occupies 1 to 141 (PBKALITGFW…VASALAHRYH (141 aa)). 2 residues coordinate heme b: histidine 58 and histidine 87.

The protein belongs to the globin family. In terms of assembly, heterotetramer of two alpha chains and two beta chains. As to expression, red blood cells.

Functionally, involved in oxygen transport from the lung to the various peripheral tissues. This is Hemoglobin subunit beta-C(NA) from Ammotragus lervia (Barbary sheep).